Reading from the N-terminus, the 188-residue chain is Antitoxin SocA (188 aa).

Interacts with cognate toxin SocB and with ClpX.

In terms of biological role, antitoxin component of an atypical type II toxin-antitoxin (TA) system. Unlike most type II TA systems, neutralizes the toxic activity of cognate toxin SocB by acting as an adapter to promote its degradation by ClpXP; degradation is dependent on the N-terminus of ClpX. The polypeptide is Antitoxin SocA (Caulobacter vibrioides (strain NA1000 / CB15N) (Caulobacter crescentus)).